The following is a 207-amino-acid chain: Dephospho-CoA kinase (207 aa).

The region spanning 10-207 is the DPCK domain; the sequence is ILGLTGGIGS…FYLTLRGGQS (198 aa). 18-23 contacts ATP; it reads GSGKSA.

The protein belongs to the CoaE family.

It is found in the cytoplasm. The catalysed reaction is 3'-dephospho-CoA + ATP = ADP + CoA + H(+). It participates in cofactor biosynthesis; coenzyme A biosynthesis; CoA from (R)-pantothenate: step 5/5. Its function is as follows. Catalyzes the phosphorylation of the 3'-hydroxyl group of dephosphocoenzyme A to form coenzyme A. The polypeptide is Dephospho-CoA kinase (Pseudomonas syringae pv. tomato (strain ATCC BAA-871 / DC3000)).